The following is a 238-amino-acid chain: Serine protease SplE (238 aa).

Positions 1-36 (MNKNIIIKSIAALTILTSVTGVGTTVVEGIQQTAKA) are cleaved as a signal peptide. Catalysis depends on charge relay system residues histidine 75, aspartate 113, and serine 191.

Belongs to the peptidase S1B family.

The protein resides in the secreted. The polypeptide is Serine protease SplE (splE) (Staphylococcus aureus (strain USA300)).